A 399-amino-acid polypeptide reads, in one-letter code: Glycosyltransferase BC10 (399 aa).

The Cytoplasmic portion of the chain corresponds to 1 to 17; the sequence is MKPPRRWMYGRGGGKGK. A helical; Signal-anchor for type II membrane protein membrane pass occupies residues 18-38; that stretch reads PAGLLLLGVFLCLSVVLLLLL. The Lumenal segment spans residues 39-399; that stretch reads HGSSPSLEGE…LIAANGASTM (361 aa). N-linked (GlcNAc...) asparagine glycans are attached at residues N142 and N188.

This sequence belongs to the glycosyltransferase 14 family. In terms of tissue distribution, expressed in roots, culms, leaves and panicles. Expressed in vascular bundles of leaf sheaths and stems where sclerenchyma cells are developing. Expressed in mechanical tissues of young organs, such as young leaf sheaths, stems and tiller buds.

The protein resides in the membrane. Functionally, glycosyltransferase required for the regulation of cellulose biosynthesis in the cell wall. Required for the biosynthesis of hexoses (glucose, mannose and galactose) in both cellulosic and non-cellulosic (pectins and hemicelluloses) components of cell walls. Required for the formation of arabinogalactan proteins which contribute to the strengthening of cell walls. Possesses low glycosyltransferase activity. In Oryza sativa subsp. japonica (Rice), this protein is Glycosyltransferase BC10.